The primary structure comprises 287 residues: Phosphatidylserine decarboxylase proenzyme (287 aa).

Active-site charge relay system; for autoendoproteolytic cleavage activity residues include D89, H146, and S252. S252 acts as the Schiff-base intermediate with substrate; via pyruvic acid; for decarboxylase activity in catalysis. S252 is subject to Pyruvic acid (Ser); by autocatalysis.

Belongs to the phosphatidylserine decarboxylase family. PSD-B subfamily. Prokaryotic type I sub-subfamily. Heterodimer of a large membrane-associated beta subunit and a small pyruvoyl-containing alpha subunit. Pyruvate serves as cofactor. Is synthesized initially as an inactive proenzyme. Formation of the active enzyme involves a self-maturation process in which the active site pyruvoyl group is generated from an internal serine residue via an autocatalytic post-translational modification. Two non-identical subunits are generated from the proenzyme in this reaction, and the pyruvate is formed at the N-terminus of the alpha chain, which is derived from the carboxyl end of the proenzyme. The autoendoproteolytic cleavage occurs by a canonical serine protease mechanism, in which the side chain hydroxyl group of the serine supplies its oxygen atom to form the C-terminus of the beta chain, while the remainder of the serine residue undergoes an oxidative deamination to produce ammonia and the pyruvoyl prosthetic group on the alpha chain. During this reaction, the Ser that is part of the protease active site of the proenzyme becomes the pyruvoyl prosthetic group, which constitutes an essential element of the active site of the mature decarboxylase.

The protein localises to the cell membrane. It carries out the reaction a 1,2-diacyl-sn-glycero-3-phospho-L-serine + H(+) = a 1,2-diacyl-sn-glycero-3-phosphoethanolamine + CO2. It participates in phospholipid metabolism; phosphatidylethanolamine biosynthesis; phosphatidylethanolamine from CDP-diacylglycerol: step 2/2. In terms of biological role, catalyzes the formation of phosphatidylethanolamine (PtdEtn) from phosphatidylserine (PtdSer). The sequence is that of Phosphatidylserine decarboxylase proenzyme from Shewanella pealeana (strain ATCC 700345 / ANG-SQ1).